The following is a 643-amino-acid chain: Arginine--tRNA ligase, mitochondrial (643 aa).

A 'HIGH' region motif is present at residues Pro188–His198.

Belongs to the class-I aminoacyl-tRNA synthetase family.

It is found in the mitochondrion matrix. It catalyses the reaction tRNA(Arg) + L-arginine + ATP = L-arginyl-tRNA(Arg) + AMP + diphosphate. This Saccharomyces cerevisiae (strain ATCC 204508 / S288c) (Baker's yeast) protein is Arginine--tRNA ligase, mitochondrial (MSR1).